Consider the following 287-residue polypeptide: Transmembrane protein 71 (287 aa).

Residues 1 to 25 (MYRDSPLMSTPVANDSRSDEGPSGK) are disordered. 2 consecutive transmembrane segments (helical) span residues 218–238 (AGLM…LVIS) and 244–264 (FVGG…IAYV).

The protein belongs to the TMEM71 family.

The protein localises to the membrane. The protein is Transmembrane protein 71 (Tmem71) of Mus musculus (Mouse).